A 446-amino-acid chain; its full sequence is Phosphoglucosamine mutase (446 aa).

Ser103 acts as the Phosphoserine intermediate in catalysis. Mg(2+) contacts are provided by Ser103, Asp242, Asp244, and Asp246. Ser103 carries the phosphoserine modification.

It belongs to the phosphohexose mutase family. It depends on Mg(2+) as a cofactor. In terms of processing, activated by phosphorylation.

The catalysed reaction is alpha-D-glucosamine 1-phosphate = D-glucosamine 6-phosphate. Its function is as follows. Catalyzes the conversion of glucosamine-6-phosphate to glucosamine-1-phosphate. The chain is Phosphoglucosamine mutase from Vibrio vulnificus (strain YJ016).